A 704-amino-acid polypeptide reads, in one-letter code: Protein NPG1 (704 aa).

TPR repeat units lie at residues 24–57, 58–90, 177–210, 309–342, 430–463, 555–588, 589–622, and 662–695; these read NGICMKTTEVEAKLDEGNIQEAESSLREGLSLNF, EEARALLGRLEYQRGNLEGALRVFEGIDLQAAI, SHAVELLPALWKESGDYQEAISAYRRALLSQWNL, IERWNTLALSYSAAGQNSAAVNLLRKSLHKHEQP, PDLIFELGVQYAEQRNLKAASRYAKEFIDATGGS, FEVWHGLAYLYSSLSHWNDVEVCLKKAGELKQYS, ASMLHTEGRMWEGRKEFKPALAAFLDGLLLDGSS, and RKAWYYLGMVHKSDGRIADATDCFQAASMLEESD.

As to quaternary structure, interacts with calmodulin in a calcium-dependent manner. Expressed only in pollen and in pollen tubes.

Functionally, calmodulin-binding protein essential for pollen germination, but not necessary for microsporogenesis or gametogenesis. This chain is Protein NPG1, found in Arabidopsis thaliana (Mouse-ear cress).